The primary structure comprises 2116 residues: MNPIHDRTSDYHKYLKVKQGDSDLFKLTVSDKRYIWYNPDPKERDSYECGEIVSETSDSFTFKTVDGQDRQVKKDDANQRNPIKFDGVEDMSELSYLNEPAVFHNLRVRYNQDLIYTYSGLFLVAVNPFKRIPIYTQEMVDIFKGRRRNEVAPHIFAISDVAYRSMLDDRQNQSLLITGESGAGKTENTKKVIQYLASVAGRNQANGSGVLEQQILQANPILEAFGNAKTTRNNNSSRFGKFIEIQFNSAGFISGASIQSYLLEKSRVVFQSETERNYHIFYQLLAGATAEEKKALHLAGPESFNYLNQSGCVDIKGVSDSEEFKITRQAMDIVGFSQEEQMSIFKIIAGILHLGNIKFEKGAGEGAVLKDKTALNAASTVFGVNPSVLEKALMEPRILAGRDLVAQHLNVEKSSSSRDALVKALYGRLFLWLVKKINNVLCQERKAYFIGVLDISGFEIFKVNSFEQLCINYTNEKLQQFFNHHMFKLEQEEYLKEKINWTFIDFGLDSQATIDLIDGRQPPGILALLDEQSVFPNATDNTLITKLHSHFSKKNAKYEEPRFSKTEFGVTHYAGQVMYEIQDWLEKNKDPLQQDLELCFKDSSDNVVTKLFNDPNIASRAKKGANFITVAAQYKEQLASLMATLETTNPHFVRCIIPNNKQLPAKLEDKVVLDQLRCNGVLEGIRITRKGFPNRIIYADFVKRYYLLAPNVPRDAEDSQKATDAVLKHLNIDPEQYRFGITKIFFRAGQLARIEEAREQRISEIIKAIQAATRGWIARKVYKQAREHTVAARIIQQNLRAYIDFKSWPWWKLFSKARPLLKRRNFEKEIKEKEREILELKSNLTDSTTQKDKLEKSLKDTESNVLDLQRQLKAEKETLKAMYDSKDALEAQKRELEIRVEDMESELDEKKLALENLQNQKRSVEEKVRDLEEELQEEQKLRNTLEKLKKKYEEELEEMKRVNDGQSDTISRLEKIKDELQKEVEELTESFSEESKDKGVLEKTRVRLQSELDDLTVRLDSETKDKSELLRQKKKLEEELKQVQEALAAETAAKLAQEAANKKLQGEYTELNEKFNSEVTARSNVEKSKKTLESQLVAVNNELDEEKKNRDALEKKKKALDAMLEEMKDQLESTGGEKKSLYDLKVKQESDMEALRNQISELQSTIAKLEKIKSTLEGEVARLQGELEAEQLAKSNVEKQKKKVELDLEDKSAQLAEETAAKQALDKLKKKLEQELSEVQTQLSEANNKNVNSDSTNKHLETSFNNLKLELEAEQKAKQALEKKRLGLESELKHVNEQLEEEKKQKESNEKRKVDLEKEVSELKDQIEEEVASKKAVTEAKNKKESELDEIKRQYADVVSSRDKSVEQLKTLQAKNEELRNTAEEAEGQLDRAERSKKKAEFDLEEAVKNLEEETAKKVKAEKAMKKAETDYRSTKSELDDAKNVSSEQYVQIKRLNEELSELRSVLEEADERCNSAIKAKKTAESALESLKDEIDAANNAKAKAERKSKELEVRVAELEESLEDKSGTVNVEFIRKKDAEIDDLRARLDRETESRIKSDEDKKNTRKQFADLEAKVEEAQREVVTIDRLKKKLESDIIDLSTQLDTETKSRIKIEKSKKKLEQTLAERRAAEEGSSKAADEEIRKQVWQEVDELRAQLDSERAALNASEKKIKSLVAEVDEVKEQLEDEILAKDKLVKAKRALEVELEEVRDQLEEEEDSRSELEDSKRRLTTEVEDIKKKYDAEVEQNTKLDEAKKKLTDDVDTLKKQLEDEKKKLNESERAKKRLESENEDFLAKLDAEVKNRSRAEKDRKKYEKDLKDTKYKLNDEAATKTQTEIGAAKLEDQIDELRSKLEQEQAKATQADKSKKTLEGEIDNLRAQIEDEGKIKMRLEKEKRALEGELEELRETVEEAEDSKSEAEQSKRLVELELEDARRNLQKEIDAKEIAEDAKSNLQREIVEAKGRLEEESIARTNSDRSRKRLEAEIDALTAQVDAEQKAKNQQIKENKKIETELKEYRKKFGESEKTKTKEFLVVEKLETDYKRAKKEAADEQQQRLTVENDLRKHLSEISLLKDAIDKLQRDHDKTKRELETETASKIEMQRKMADFFGGFKA.

The 53-residue stretch at 30–82 (SDKRYIWYNPDPKERDSYECGEIVSETSDSFTFKTVDGQDRQVKKDDANQRNP) folds into the Myosin N-terminal SH3-like domain. Residues 86-759 (DGVEDMSELS…QLARIEEARE (674 aa)) form the Myosin motor domain. Lysine 130 is subject to N6,N6-dimethyllysine. 179 to 186 (GESGAGKT) contributes to the ATP binding site. 2 actin-binding regions span residues 638–660 (LASLMATLETTNPHFVRCIIPNN) and 738–752 (RFGITKIFFRAGQLA). The region spanning 762-791 (ISEIIKAIQAATRGWIARKVYKQAREHTVA) is the IQ domain. Residues 817 to 2116 (ARPLLKRRNF…MADFFGGFKA (1300 aa)) are a coiled coil. Disordered regions lie at residues 1295 to 1314 (VNEQLEEEKKQKESNEKRKV), 1363 to 1399 (DKSVEQLKTLQAKNEELRNTAEEAEGQLDRAERSKKK), 1415 to 1444 (TAKKVKAEKAMKKAETDYRSTKSELDDAKN), 1711 to 1731 (VRDQLEEEEDSRSELEDSKRR), 1771 to 1791 (LEDEKKKLNESERAKKRLESE), and 1805 to 1844 (NRSRAEKDRKKYEKDLKDTKYKLNDEAATKTQTEIGAAKL). 3 stretches are compositionally biased toward basic and acidic residues: residues 1375-1399 (KNEELRNTAEEAEGQLDRAERSKKK), 1415-1443 (TAKKVKAEKAMKKAETDYRSTKSELDDAK), and 1722-1731 (RSELEDSKRR). The segment covering 1805–1832 (NRSRAEKDRKKYEKDLKDTKYKLNDEAA) has biased composition (basic and acidic residues). 3 positions are modified to phosphothreonine; by MHCK: threonine 1823, threonine 1833, and threonine 2029.

It belongs to the TRAFAC class myosin-kinesin ATPase superfamily. Myosin family. In terms of assembly, myosin-2 heavy chain is two-headed. It self-assembles into filaments. Hexamer of 2 heavy chain subunits (MHC), 2 alkali light chain subunits (MLC) and 2 regulatory light chain subunits (MLC-2). Associates with elmoA. Post-translationally, phosphorylation inhibits thick filament formation and reduces the actin-activated ATPase activity.

The protein localises to the cytoplasm. Its subcellular location is the cell cortex. Functionally, myosin is a protein that binds to actin and has ATPase activity that is activated by actin. The sequence is that of Myosin-2 heavy chain (mhcA) from Dictyostelium discoideum (Social amoeba).